Here is a 61-residue protein sequence, read N- to C-terminus: Large ribosomal subunit protein bL32 (61 aa).

Basic residues predominate over residues 1–16 (MAVPKRKTSPSKRGMR). The tract at residues 1–35 (MAVPKRKTSPSKRGMRRSADGLKSATYVEDKNSGE) is disordered.

Belongs to the bacterial ribosomal protein bL32 family.

This Agrobacterium fabrum (strain C58 / ATCC 33970) (Agrobacterium tumefaciens (strain C58)) protein is Large ribosomal subunit protein bL32.